Consider the following 231-residue polypeptide: Glutathione-specific gamma-glutamylcyclotransferase (231 aa).

Isoleucine 49–serine 54 lines the substrate pocket. Residue glutamate 127 is the Proton acceptor of the active site.

The protein belongs to the gamma-glutamylcyclotransferase family. ChaC subfamily.

The catalysed reaction is glutathione = L-cysteinylglycine + 5-oxo-L-proline. Catalyzes the cleavage of glutathione into 5-oxo-L-proline and a Cys-Gly dipeptide. Acts specifically on glutathione, but not on other gamma-glutamyl peptides. This Escherichia coli (strain K12) protein is Glutathione-specific gamma-glutamylcyclotransferase.